A 345-amino-acid polypeptide reads, in one-letter code: Very-long-chain 3-oxoacyl-CoA reductase (345 aa).

Residues 26-46 (GAAVLLATGGLFLASRVLTFV) traverse the membrane as a helical segment. NADP(+)-binding residues include valine 71, aspartate 125, aspartate 133, asparagine 152, tyrosine 219, lysine 223, isoleucine 252, and serine 254. The active-site Proton donor is the tyrosine 219. Lysine 223 acts as the Lowers pKa of active site Tyr in catalysis.

Belongs to the short-chain dehydrogenases/reductases (SDR) family.

The protein localises to the endoplasmic reticulum membrane. It carries out the reaction a very-long-chain (3R)-3-hydroxyacyl-CoA + NADP(+) = a very-long-chain 3-oxoacyl-CoA + NADPH + H(+). It participates in lipid metabolism; fatty acid biosynthesis. Component of the microsomal membrane bound fatty acid elongation system, which produces the 26-carbon very long-chain fatty acids (VLCFA) from palmitate. Catalyzes the reduction of the 3-ketoacyl-CoA intermediate that is formed in each cycle of fatty acid elongation. VLCFAs serve as precursors for ceramide and sphingolipids. In Aspergillus clavatus (strain ATCC 1007 / CBS 513.65 / DSM 816 / NCTC 3887 / NRRL 1 / QM 1276 / 107), this protein is Very-long-chain 3-oxoacyl-CoA reductase.